We begin with the raw amino-acid sequence, 188 residues long: Ribosome maturation factor RimM (188 aa).

The PRC barrel domain maps to Gln-93–Asp-175.

Belongs to the RimM family. In terms of assembly, binds ribosomal protein uS19.

Its subcellular location is the cytoplasm. An accessory protein needed during the final step in the assembly of 30S ribosomal subunit, possibly for assembly of the head region. Essential for efficient processing of 16S rRNA. May be needed both before and after RbfA during the maturation of 16S rRNA. It has affinity for free ribosomal 30S subunits but not for 70S ribosomes. The polypeptide is Ribosome maturation factor RimM (Gluconacetobacter diazotrophicus (strain ATCC 49037 / DSM 5601 / CCUG 37298 / CIP 103539 / LMG 7603 / PAl5)).